Here is a 397-residue protein sequence, read N- to C-terminus: Teichoic acid D-alanine hydrolase (397 aa).

A signal peptide spans 1-27 (MKFNKEKLVIHACVLLFIIISIGLVFH).

The protein localises to the cell membrane. It carries out the reaction [(4-D-Ala)-(2-GlcNAc)-Rib-ol-P]n-[Gro-P]m-beta-D-ManNAc-(1-&gt;4)-alpha-D-GlcNAc-P-peptidoglycan + n H2O = [(2-GlcNAc)-Rib-ol-P]n-[Gro-P]m-beta-D-ManNAc-(1-&gt;4)-alpha-D-GlcNAc-P-peptidoglycan + n D-alanine.. Catalyzes the liberation of D-alanyl moieties present on wall teichoic acid (WTA) and lipoteichoic acid (LTA). Affects the methicillin resistance level and autolysis in the presence of Triton X-100 as well as the cell wall structure. The sequence is that of Teichoic acid D-alanine hydrolase (fmtA) from Staphylococcus aureus (strain MRSA252).